The primary structure comprises 116 residues: NADH-ubiquinone oxidoreductase chain 3 (116 aa).

3 helical membrane passes run 8-28, 56-76, and 87-107; these read VAATALISLILAFVAFWLPSL, FFLVAILFLLFDLEIALLLPL, and ISLLWATSIIILLTLGLIYEW.

Belongs to the complex I subunit 3 family.

The protein resides in the mitochondrion membrane. It catalyses the reaction a ubiquinone + NADH + 5 H(+)(in) = a ubiquinol + NAD(+) + 4 H(+)(out). In terms of biological role, core subunit of the mitochondrial membrane respiratory chain NADH dehydrogenase (Complex I) that is believed to belong to the minimal assembly required for catalysis. Complex I functions in the transfer of electrons from NADH to the respiratory chain. The immediate electron acceptor for the enzyme is believed to be ubiquinone. In Squalus acanthias (Spiny dogfish), this protein is NADH-ubiquinone oxidoreductase chain 3 (MT-ND3).